We begin with the raw amino-acid sequence, 370 residues long: Protein-tyrosine sulfotransferase 1 (370 aa).

At 1 to 8 (MVGKLKQN) the chain is on the cytoplasmic side. Residues 9–25 (LLLACLVISSVTVFYLG) form a helical; Signal-anchor for type II membrane protein membrane-spanning segment. The Lumenal portion of the chain corresponds to 26–370 (QHAMECHHRI…KEKPQTEQVE (345 aa)). Asparagine 60 carries N-linked (GlcNAc...) asparagine glycosylation. 79–83 (RSGTT) lines the 3'-phosphoadenylyl sulfate pocket. An intrachain disulfide couples cysteine 97 to cysteine 157. The active-site Proton donor/acceptor is the glutamate 100. An interaction with peptide substrate region spans residues 102-106 (RVIPR). 3'-phosphoadenylyl sulfate is bound by residues arginine 184, serine 192, and arginine 196. A disulfide bridge connects residues cysteine 226 and cysteine 234. A 3'-phosphoadenylyl sulfate-binding site is contributed by tyrosine 239. A glycan (N-linked (GlcNAc...) asparagine) is linked at asparagine 262. Residues 286–295 (STDQVIKPVN) and lysine 301 each bind 3'-phosphoadenylyl sulfate.

It belongs to the protein sulfotransferase family. Homodimer. Can also form heterodimers with TPST2. N-glycosylated.

The protein resides in the golgi apparatus membrane. It carries out the reaction L-tyrosyl-[protein] + 3'-phosphoadenylyl sulfate = O-sulfo-L-tyrosine-[protein] + adenosine 3',5'-bisphosphate + H(+). In terms of biological role, catalyzes the O-sulfation of tyrosine residues within acidic motifs of polypeptides, using 3'-phosphoadenylyl sulfate (PAPS) as cosubstrate. The chain is Protein-tyrosine sulfotransferase 1 (Tpst1) from Rattus norvegicus (Rat).